The primary structure comprises 98 residues: NADH-ubiquinone oxidoreductase chain 4L (98 aa).

3 consecutive transmembrane segments (helical) span residues proline 2 to phenylalanine 22, leucine 26 to valine 46, and proline 58 to valine 79.

The protein belongs to the complex I subunit 4L family. Core subunit of respiratory chain NADH dehydrogenase (Complex I) which is composed of 45 different subunits.

It is found in the mitochondrion inner membrane. It catalyses the reaction a ubiquinone + NADH + 5 H(+)(in) = a ubiquinol + NAD(+) + 4 H(+)(out). Functionally, core subunit of the mitochondrial membrane respiratory chain NADH dehydrogenase (Complex I) which catalyzes electron transfer from NADH through the respiratory chain, using ubiquinone as an electron acceptor. Part of the enzyme membrane arm which is embedded in the lipid bilayer and involved in proton translocation. The sequence is that of NADH-ubiquinone oxidoreductase chain 4L from Mus musculus (Mouse).